The chain runs to 558 residues: Laccase-10 (558 aa).

An N-terminal signal peptide occupies residues methionine 1–glycine 22. Plastocyanin-like domains lie at asparagine 30 to glycine 146 and glutamate 157 to threonine 308. N-linked (GlcNAc...) asparagine glycosylation is present at asparagine 76. Cu cation-binding residues include histidine 80 and histidine 82. Asparagine 112 carries N-linked (GlcNAc...) asparagine glycosylation. Cu cation is bound by residues histidine 125 and histidine 127. Asparagine 185, asparagine 296, asparagine 323, asparagine 373, asparagine 383, asparagine 400, and asparagine 441 each carry an N-linked (GlcNAc...) asparagine glycan. Residues aspartate 408 to lysine 542 form the Plastocyanin-like 3 domain. Positions 459, 462, 464, 521, 522, 523, and 527 each coordinate Cu cation. The N-linked (GlcNAc...) asparagine glycan is linked to asparagine 545.

The protein belongs to the multicopper oxidase family. Cu cation serves as cofactor. In terms of tissue distribution, ubiquitous, with lower levels in siliques.

Its subcellular location is the secreted. It localises to the extracellular space. It is found in the apoplast. The catalysed reaction is 4 hydroquinone + O2 = 4 benzosemiquinone + 2 H2O. Its function is as follows. Lignin degradation and detoxification of lignin-derived products. This chain is Laccase-10 (LAC10), found in Arabidopsis thaliana (Mouse-ear cress).